We begin with the raw amino-acid sequence, 793 residues long: Transcription factor castor (793 aa).

The segment covering 44-53 (NEDISSSTSV) has biased composition (polar residues). Disordered stretches follow at residues 44-101 (NEDI…NLIA), 199-259 (VTST…HTNA), and 272-296 (LESTTDSLDSPSMYTPVKQPADSSY). 3 stretches are compositionally biased toward low complexity: residues 54–68 (QQQQQQQQEQLQQPQ), 81–98 (SSQNTNCSSSRSCSPNSN), and 210–221 (ATPAPSAGATAG). Threonine 211 is modified (phosphothreonine). Phosphoserine is present on serine 215. Acidic residues predominate over residues 233–242 (ESADDDEDDD). The span at 245–254 (LSSLTSCSSS) shows a compositional bias: low complexity. Residues 273–284 (ESTTDSLDSPSM) show a composition bias toward polar residues. A C2H2-type 1; atypical zinc finger spans residues 377 to 402 (FHCHEEPCQGKILSKKDDIIRHLKWH). 3 C2H2-type zinc fingers span residues 439–463 (YHCVYEHCPKVYVSTSDVQMHANFH), 498–522 (YHCCREGCTHTFKNKADMDKHKTYH), and 556–580 (IHCVREGCDYILHSSSQMISHKRKH). The segment at 599 to 682 (EESSLDAMPQ…RLKVEDESSN (84 aa)) is disordered. Residues 608–629 (QQQQQQQQQQPTSLSQSQSSSS) show a composition bias toward low complexity. Polar residues predominate over residues 630–644 (VCGGSNTSTPLSSLS). The segment at residues 650-662 (ARKRGRPPKKIQL) is a DNA-binding region (a.T hook).

Expressed in a specific subset of neuroblasts in the ventral nerve cord and the procephalic region in the embryo. Expressed in many, if not all, late delaminating NBs, and in early NBs, but only after they have undergone several rounds of ganglion mother cell-producing divisions.

The protein localises to the nucleus. Functionally, transcription factor that specifies expression of key genes in developing central nervous system (CNS). Essential for many, if not all, late developing neuroblastoma (NB) sublineages. Binds to the 5'-[CG]C[CT][CT]AAAAA[AT]-3' DNA sequence, like hb, suggesting that cas and hb act as a late regulators in early and late CNS NB sublineage, respectively. Acts by repressing expression of nub/pdm-1 and pdm2/pdm-2 POU genes, and restrict their pattern of expression in appropriate cells. Required for a full expression of vvl/drifter and acj6/I-POU; it is however unknown whether it directly activates these genes. Controls engrailed (en) expression in the ventral nerve cord. The chain is Transcription factor castor (cas) from Drosophila melanogaster (Fruit fly).